The sequence spans 317 residues: Tenomodulin (317 aa).

At Met-1–Lys-30 the chain is on the cytoplasmic side. Residues Ile-31–Ser-50 traverse the membrane as a helical; Signal-anchor for type II membrane protein segment. The Extracellular segment spans residues Lys-51–Val-317. In terms of domain architecture, BRICHOS spans Gly-93 to Ile-186. Asn-94 is a glycosylation site (N-linked (GlcNAc...) asparagine). An intrachain disulfide couples Cys-120 to Cys-178. Asn-180 is a glycosylation site (N-linked (GlcNAc...) asparagine). Ser-239 carries the phosphoserine modification.

It belongs to the chondromodulin-1 family. In terms of tissue distribution, widely expressed with highest expression in tendons and ligaments, in the diaphragm, eye and skeletal muscle. Expressed in neuronal cells of all brain regions. Very low expression, if any, in glial cells.

Its subcellular location is the membrane. It is found in the nucleus envelope. Its function is as follows. May be an angiogenesis inhibitor. In Mus musculus (Mouse), this protein is Tenomodulin (Tnmd).